The primary structure comprises 603 residues: Elongation factor 4 (603 aa).

Residues 7–189 (VRIRNFCIIA…AVVERIPPPP (183 aa)) enclose the tr-type G domain. Residues 19 to 24 (DHGKST) and 136 to 139 (NKID) contribute to the GTP site.

The protein belongs to the TRAFAC class translation factor GTPase superfamily. Classic translation factor GTPase family. LepA subfamily.

It is found in the cell inner membrane. The catalysed reaction is GTP + H2O = GDP + phosphate + H(+). Functionally, required for accurate and efficient protein synthesis under certain stress conditions. May act as a fidelity factor of the translation reaction, by catalyzing a one-codon backward translocation of tRNAs on improperly translocated ribosomes. Back-translocation proceeds from a post-translocation (POST) complex to a pre-translocation (PRE) complex, thus giving elongation factor G a second chance to translocate the tRNAs correctly. Binds to ribosomes in a GTP-dependent manner. The chain is Elongation factor 4 from Trichormus variabilis (strain ATCC 29413 / PCC 7937) (Anabaena variabilis).